Here is a 287-residue protein sequence, read N- to C-terminus: Heterodimeric geranylgeranyl pyrophosphate synthase small subunit 2, chloroplastic (287 aa).

2 residues coordinate Mg(2+): Glu103 and Asp109. The dimethylallyl diphosphate site is built by Lys204, Gln241, and Lys250.

This sequence belongs to the FPP/GGPP synthase family. As to quaternary structure, part of a heterodimeric geranyl(geranyl)diphosphate synthase. It depends on Mg(2+) as a cofactor. As to expression, mainly expressed in trichomes, and, to a lower extent, in roots, leaves, flowers and stems.

The protein localises to the plastid. It localises to the chloroplast thylakoid membrane. Its function is as follows. Heterodimeric geranyl(geranyl)-diphosphate (GPP) synthase small subunit. The small subunit alone is inactive in vitro while the large subunit GGPPS1 catalyzes mainly the production of geranygeranyl-diphosphate in vitro. Upon association of the two subunits, the product profile changes and the production of gerany-diphosphate is strongly increased. This Cannabis sativa (Hemp) protein is Heterodimeric geranylgeranyl pyrophosphate synthase small subunit 2, chloroplastic.